The following is a 336-amino-acid chain: MAVKVAINGFGRIGRLAFRRIQEVEGLEVVAVNDLTDDDMLAHLLKYDTMQGRFTGEVEVVDGGFRVNGKEVKSFSEPDASKLPWKDLNIDVVLECTGFYTDKDKAQAHIEAGAKKVLISAPATGDLKTIVFNTNHQELDGSETVVSGASCTTNSLAPVAKVLNDDFGLVEGLMTTIHAYTGDQNTQDAPHRKGDKRRARAAAENIIPNSTGAAKAIGKVIPEIDGKLDGGAQRVPVATGSLTELTVVLEKQDVTVEQVNEAMKNASNESFGYTEDEIVSSDVVGMTYGSLFDATQTRVMSVGDRQLVKVAAWYDNEMSYTAQLVRTLAYLAELSK.

Residues 12–13 (RI), Asp34, and Ser120 contribute to the NAD(+) site. D-glyceraldehyde 3-phosphate-binding positions include 150 to 152 (SCT), Thr181, Arg198, 211 to 212 (TG), and Arg234. Cys151 serves as the catalytic Nucleophile. NAD(+) is bound at residue Asn316.

This sequence belongs to the glyceraldehyde-3-phosphate dehydrogenase family. In terms of assembly, homotetramer.

The protein resides in the cytoplasm. The enzyme catalyses D-glyceraldehyde 3-phosphate + phosphate + NAD(+) = (2R)-3-phospho-glyceroyl phosphate + NADH + H(+). Its pathway is carbohydrate degradation; glycolysis; pyruvate from D-glyceraldehyde 3-phosphate: step 1/5. Catalyzes the oxidative phosphorylation of glyceraldehyde 3-phosphate (G3P) to 1,3-bisphosphoglycerate (BPG) using the cofactor NAD. The first reaction step involves the formation of a hemiacetal intermediate between G3P and a cysteine residue, and this hemiacetal intermediate is then oxidized to a thioester, with concomitant reduction of NAD to NADH. The reduced NADH is then exchanged with the second NAD, and the thioester is attacked by a nucleophilic inorganic phosphate to produce BPG. This is Glyceraldehyde-3-phosphate dehydrogenase (gapA) from Staphylococcus aureus.